The chain runs to 243 residues: Ribonuclease HII (243 aa).

Residues 23–217 (SVIVGVDEVG…LSSECEGAPP (195 aa)) enclose the RNase H type-2 domain. A divalent metal cation is bound by residues aspartate 29, glutamate 30, and aspartate 122. The interval 223–243 (LSSTGIKTPVDGRGDAVATRD) is disordered. Basic and acidic residues predominate over residues 232 to 243 (VDGRGDAVATRD).

This sequence belongs to the RNase HII family. Requires Mn(2+) as cofactor. It depends on Mg(2+) as a cofactor.

The protein resides in the cytoplasm. It catalyses the reaction Endonucleolytic cleavage to 5'-phosphomonoester.. In terms of biological role, endonuclease that specifically degrades the RNA of RNA-DNA hybrids. The chain is Ribonuclease HII from Anaplasma marginale (strain St. Maries).